Reading from the N-terminus, the 142-residue chain is MEVFVMSTSLGDEVIVMQSRSYSCGPAALATVLRNLGVNCTEAELAELAGTDESGTTMYGLIVAATSKGLRARGVKMELNDLRKNHIVFVKYGDTCHYTVIMSMDERNVTLADPALGRITVKREIFSRIFTGNVLVVERPCD.

In terms of domain architecture, Peptidase C39 spans 18 to 137; it reads QSRSYSCGPA…RIFTGNVLVV (120 aa).

This is an uncharacterized protein from Methanothermobacter thermautotrophicus (strain ATCC 29096 / DSM 1053 / JCM 10044 / NBRC 100330 / Delta H) (Methanobacterium thermoautotrophicum).